The following is a 400-amino-acid chain: Envelope glycoprotein M (400 aa).

Residues 1–16 lie on the Intravirion side of the membrane; that stretch reads MRASKSDRFLMSSWVK. The helical transmembrane segment at 17 to 37 threads the bilayer; it reads LLFVAVIMYICSAVVPMAATY. Residues 38–76 lie on the Virion surface side of the membrane; that stretch reads EGLGFPCYFNNLVNYSALNLTVRNSAKHLTPTLFLEKPE. A helical transmembrane segment spans residues 77-97; the sequence is MLVYIFWTFIVDGIAIVYYCL. Over 98–113 the chain is Intravirion; that stretch reads AAVAVYRAKHVHATTM. Residues 114–134 traverse the membrane as a helical segment; sequence MSMQSWIALLGSHSVLYVAIL. The Virion surface segment spans residues 135-152; the sequence is RMWSMQLFIHVLSYKHVL. Residues 153–173 form a helical membrane-spanning segment; the sequence is MAAFVYCIHFCISFAHIQSLI. At 174–208 the chain is on the intravirion side; that stretch reads TCNSAQWEIPLLEQHVPDNTMMESLLTRWKPVCVN. The helical transmembrane segment at 209–229 threads the bilayer; that stretch reads LYLSTTALEMLLFSLSTMMAV. Residues 230–234 lie on the Virion surface side of the membrane; the sequence is GNSFY. Residues 235 to 255 traverse the membrane as a helical segment; the sequence is VLVSDAIFGAVNMFLALTVVW. Over 256–270 the chain is Intravirion; sequence YINTEFFLVKFMRRQ. Residues 271 to 291 form a helical membrane-spanning segment; it reads VGFYVGVFVGYLILLLPVIRY. Over 292–300 the chain is Virion surface; the sequence is ENAFVQANL. Residues 301–321 form a helical membrane-spanning segment; that stretch reads HYIVAINISCIPILCILAIVI. The Intravirion segment spans residues 322 to 400; sequence RVIRSDWGLC…EIDETQMIFI (79 aa). Residues 348–394 are disordered; it reads DRTPTVHQKPPPLPAKTRARAKVKDISTPAPRTQYQSDHESDSEIDE.

The protein belongs to the herpesviridae glycoprotein M family. As to quaternary structure, interacts (via N-terminus) with gN (via N-terminus). The gM-gN heterodimer forms the gCII complex. Post-translationally, N-glycosylated.

The protein resides in the virion membrane. It localises to the host Golgi apparatus. Its subcellular location is the host trans-Golgi network. It is found in the host endosome membrane. The protein localises to the host nucleus inner membrane. Functionally, envelope glycoprotein important for virion assembly and egress. Plays a role in the correct incorporation of gH-gL into virion membrane. Directs the glycoprotein N (gN) to the host trans-Golgi network. The sequence is that of Envelope glycoprotein M from Homo sapiens (Human).